The chain runs to 378 residues: Prolargin (378 aa).

Positions 1-21 (MRASFFWLLPLLLILASVAQG) are cleaved as a signal peptide. The interval 22-62 (QPTRPKPGIRRKPKPRPTPRFPQAPEPAEPTDLPPPLPPGP) is disordered. A compositionally biased stretch (basic residues) spans 28–38 (PGIRRKPKPRP). Pro residues predominate over residues 39–62 (TPRFPQAPEPAEPTDLPPPLPPGP). LRR repeat units lie at residues 91–110 (RRVP…NNFI), 111–134 (TELP…NNRI), 135–158 (RKVD…KNQL), 159–179 (EEVP…QNLI), 180–203 (SRIP…HNRL), 204–229 (SDGV…HNIL), 230–250 (RKMP…SNKI), 251–274 (ETIP…YNKL), 275–299 (SDRG…HNKI), 300–319 (SNVP…NNSI), 320–358 (EKIN…GNFL), and 359–378 (KPPI…SVVI). N-linked (GlcNAc...) asparagine glycosylation is present at N120. N285, N316, and N323 each carry an N-linked (GlcNAc...) asparagine glycan. The cysteines at positions 328 and 369 are disulfide-linked.

This sequence belongs to the small leucine-rich proteoglycan (SLRP) family. SLRP class II subfamily. In terms of assembly, binds the basement membrane heparan sulfate proteoglycan perlecan and triple helical collagens type I and type II. Glycosylated; contains heparan sulfate. In terms of tissue distribution, expressed in cartilage throughout both fetal development and postnatal life. It is also expressed in the developing embryo prior to skeletogenesis. In adult, highest expression in lung, lower levels in cardiac and skeletal muscle.

It localises to the secreted. The protein localises to the extracellular space. It is found in the extracellular matrix. In terms of biological role, may anchor basement membranes to the underlying connective tissue. This chain is Prolargin (Prelp), found in Mus musculus (Mouse).